Consider the following 359-residue polypeptide: DNA integrity scanning protein DisA (359 aa).

The region spanning 7–146 (DEVLRQTLAI…NRRYVLEGSD (140 aa)) is the DAC domain. Residues Gly-74, Leu-92, and 105–109 (TRHRT) contribute to the ATP site.

It belongs to the DisA family. Homooctamer. The cofactor is Mg(2+).

The enzyme catalyses 2 ATP = 3',3'-c-di-AMP + 2 diphosphate. In terms of biological role, participates in a DNA-damage check-point. DisA forms globular foci that rapidly scan along the chromosomes searching for lesions. Also has diadenylate cyclase activity, catalyzing the condensation of 2 ATP molecules into cyclic di-AMP (c-di-AMP). c-di-AMP likely acts as a signaling molecule that may couple DNA integrity with a cellular process. This Kineococcus radiotolerans (strain ATCC BAA-149 / DSM 14245 / SRS30216) protein is DNA integrity scanning protein DisA.